The sequence spans 357 residues: MAIQSDSLSSRPDAPRLVAPAPASPNEESIERALRPKALQEYVGQQRAREQLEIFIAAARKRSEALDHVLLFGPPGLGKTTLAHIIAHEMGVQMRQTSGPVLERPGDLAALLTNLERNDVLFIDEIHRLSPVVEEILYPALEDFQIDILIGEGPAARSVKLDLQPFTLVGATTRAGMLTNPLRDRFGIVSRLEFYNTDDLAHIVTRSAGLLNADITPEGAREVARRARGTPRIANRLLRRVRDYAEVKAGGRIDTEAANQALAMLEVDPQGLDLMDRKLLEAIVHKFDGGPVGVDSLAAAIGEERDTIEDVIEPYLIQHGYLQRTPRGRMATQTTWRHLGLQPPSGSQPSSGDLFGA.

Residues 1 to 10 (MAIQSDSLSS) are compositionally biased toward polar residues. Positions 1 to 30 (MAIQSDSLSSRPDAPRLVAPAPASPNEESI) are disordered. The large ATPase domain (RuvB-L) stretch occupies residues 5-195 (SDSLSSRPDA…FGIVSRLEFY (191 aa)). ATP-binding positions include Leu-34, Arg-35, Gly-76, Lys-79, Thr-80, Thr-81, 142-144 (EDF), Arg-185, Tyr-195, and Arg-232. Thr-80 contacts Mg(2+). Positions 196 to 266 (NTDDLAHIVT…AANQALAMLE (71 aa)) are small ATPAse domain (RuvB-S). A head domain (RuvB-H) region spans residues 269-357 (PQGLDLMDRK…QPSSGDLFGA (89 aa)). Residues Arg-305, Arg-324, and Arg-329 each contribute to the DNA site.

This sequence belongs to the RuvB family. In terms of assembly, homohexamer. Forms an RuvA(8)-RuvB(12)-Holliday junction (HJ) complex. HJ DNA is sandwiched between 2 RuvA tetramers; dsDNA enters through RuvA and exits via RuvB. An RuvB hexamer assembles on each DNA strand where it exits the tetramer. Each RuvB hexamer is contacted by two RuvA subunits (via domain III) on 2 adjacent RuvB subunits; this complex drives branch migration. In the full resolvosome a probable DNA-RuvA(4)-RuvB(12)-RuvC(2) complex forms which resolves the HJ.

It is found in the cytoplasm. It carries out the reaction ATP + H2O = ADP + phosphate + H(+). In terms of biological role, the RuvA-RuvB-RuvC complex processes Holliday junction (HJ) DNA during genetic recombination and DNA repair, while the RuvA-RuvB complex plays an important role in the rescue of blocked DNA replication forks via replication fork reversal (RFR). RuvA specifically binds to HJ cruciform DNA, conferring on it an open structure. The RuvB hexamer acts as an ATP-dependent pump, pulling dsDNA into and through the RuvAB complex. RuvB forms 2 homohexamers on either side of HJ DNA bound by 1 or 2 RuvA tetramers; 4 subunits per hexamer contact DNA at a time. Coordinated motions by a converter formed by DNA-disengaged RuvB subunits stimulates ATP hydrolysis and nucleotide exchange. Immobilization of the converter enables RuvB to convert the ATP-contained energy into a lever motion, pulling 2 nucleotides of DNA out of the RuvA tetramer per ATP hydrolyzed, thus driving DNA branch migration. The RuvB motors rotate together with the DNA substrate, which together with the progressing nucleotide cycle form the mechanistic basis for DNA recombination by continuous HJ branch migration. Branch migration allows RuvC to scan DNA until it finds its consensus sequence, where it cleaves and resolves cruciform DNA. The chain is Holliday junction branch migration complex subunit RuvB from Bordetella avium (strain 197N).